A 358-amino-acid chain; its full sequence is DNA ligase C (358 aa).

The active-site N6-AMP-lysine intermediate is Lys29.

Belongs to the ATP-dependent DNA ligase family. A divalent metal cation is required as a cofactor.

The catalysed reaction is ATP + (deoxyribonucleotide)n-3'-hydroxyl + 5'-phospho-(deoxyribonucleotide)m = (deoxyribonucleotide)n+m + AMP + diphosphate.. Its function is as follows. DNA ligase that seals nicks in double-stranded DNA during DNA replication, DNA recombination and DNA repair. This chain is DNA ligase C (ligC), found in Mycobacterium tuberculosis (strain ATCC 25618 / H37Rv).